The sequence spans 505 residues: Surface lipoprotein assembly modifier 2 (505 aa).

An N-terminal signal peptide occupies residues 1–19 (MLYFRYGFLVVWCAAGVSA). Positions 23–188 (ADAPAILDDK…RFRKKTEGLT (166 aa)) are N-terminal domain. The C-terminal probable beta barrel stretch occupies residues 189–505 (GWRFSGGISP…EVFVSADWRF (317 aa)). The next 14 membrane-spanning stretches (beta stranded) occupy residues 190–200 (WRFSGGISPAV), 232–243 (LNYEIEAEKLTP), 248–258 (HYLLFRSNIGG), 273–283 (FGRAYLGWQYK), 287–297 (QTAGILPFYQV), 326–335 (VGVQLSHTYR), 340–350 (WQFSVALEHYR), 368–377 (GFYVSSAKRL), 381–391 (ATVFGGWQFVR), 411–420 (NGVYAGWAQE), 427–437 (LNSRVSASYAR), 456–465 (WNVSLALSHD), 472–482 (IVPALNYRFGR), and 495–505 (SEVFVSADWRF).

The protein belongs to the Slam family.

It is found in the cell outer membrane. Its function is as follows. Required for correct export to the cell surface of cell outer membrane lipoprotein HpuA heterologously in E.coli (hpuA does not exist in N.meningitidis strain MC58). The polypeptide is Surface lipoprotein assembly modifier 2 (Neisseria meningitidis serogroup B (strain ATCC BAA-335 / MC58)).